The following is a 350-amino-acid chain: MSEVKSRKKSGPKGAPAAEPGKRSEGGKTPVARSSGGGGWADPRTCLSLLSLGTCLGLAWFVFQQSEKFAKVENQYQLLKLETNEFQQLQSKISLISEKWQKSEAIMEQLKSFQIIAHLKRLQEEINEVKTWSNRITEKQDILNNSLTTLSQDITKVDQSTTSMAKDVGLKITSVKTDIRRISGLVTDVISLTDSVQELENKIEKVEKNTVKNIGDLLSSSIDRTATLRKTASENSQRINSVKKTLTELKSDFDKHTDRFLSLEGDRAKVLKTVTFANDLKPKVYNLKKDFSRLEPLVNDLTLRIGRLVTDLLQREKEIAFLSEKISNLTIVQAEIKDIKDEIAHISDMN.

The span at 1 to 11 (MSEVKSRKKSG) shows a compositional bias: basic residues. Residues 1 to 39 (MSEVKSRKKSGPKGAPAAEPGKRSEGGKTPVARSSGGGG) form a disordered region. The helical transmembrane segment at 46-62 (CLSLLSLGTCLGLAWFV) threads the bilayer. A glycan (N-linked (GlcNAc...) asparagine) is linked at Asn144. A coiled-coil region spans residues 184-217 (GLVTDVISLTDSVQELENKIEKVEKNTVKNIGDL). The N-linked (GlcNAc...) asparagine glycan is linked to Asn328.

N-glycosylated. Isoform 4 is glycosylated at Asn-154. As to expression, expressed in vein endothelial cells. Isoform 4 is expressed in lung, kidney, spleen, thymus and skeletal muscle.

Its subcellular location is the endoplasmic reticulum membrane. Functionally, target of p53/TP53 with pro-apoptotic function. The chain is Inhibitor of nuclear factor kappa-B kinase-interacting protein (IKBIP) from Homo sapiens (Human).